Reading from the N-terminus, the 185-residue chain is Ribosome-recycling factor (185 aa).

Belongs to the RRF family.

It is found in the cytoplasm. In terms of biological role, responsible for the release of ribosomes from messenger RNA at the termination of protein biosynthesis. May increase the efficiency of translation by recycling ribosomes from one round of translation to another. This chain is Ribosome-recycling factor, found in Ectopseudomonas mendocina (strain ymp) (Pseudomonas mendocina).